We begin with the raw amino-acid sequence, 674 residues long: Translation factor GUF1, mitochondrial (674 aa).

The transit peptide at Met-1–Gln-48 directs the protein to the mitochondrion. The 181-residue stretch at Glu-66–Leu-246 folds into the tr-type G domain. GTP-binding positions include Ala-75 to Ser-82, Asp-139 to His-143, and Asn-193 to Asp-196.

The protein belongs to the TRAFAC class translation factor GTPase superfamily. Classic translation factor GTPase family. LepA subfamily.

The protein localises to the mitochondrion inner membrane. The enzyme catalyses GTP + H2O = GDP + phosphate + H(+). Functionally, promotes mitochondrial protein synthesis. May act as a fidelity factor of the translation reaction, by catalyzing a one-codon backward translocation of tRNAs on improperly translocated ribosomes. Binds to mitochondrial ribosomes in a GTP-dependent manner. This Arthroderma otae (strain ATCC MYA-4605 / CBS 113480) (Microsporum canis) protein is Translation factor GUF1, mitochondrial.